The primary structure comprises 86 residues: Small ribosomal subunit protein bS20 (86 aa).

Belongs to the bacterial ribosomal protein bS20 family.

In terms of biological role, binds directly to 16S ribosomal RNA. This Pelagibacter ubique (strain HTCC1062) protein is Small ribosomal subunit protein bS20.